Consider the following 131-residue polypeptide: Small ribosomal subunit protein uS11 (131 aa).

This sequence belongs to the universal ribosomal protein uS11 family. As to quaternary structure, part of the 30S ribosomal subunit. Interacts with proteins S7 and S18. Binds to IF-3.

Its function is as follows. Located on the platform of the 30S subunit, it bridges several disparate RNA helices of the 16S rRNA. Forms part of the Shine-Dalgarno cleft in the 70S ribosome. This is Small ribosomal subunit protein uS11 from Wigglesworthia glossinidia brevipalpis.